Here is a 475-residue protein sequence, read N- to C-terminus: Probable pectate lyase 7 (475 aa).

The signal sequence occupies residues 1–24 (METARLFKLVCVICIASLIPTIRA). N-linked (GlcNAc...) asparagine glycans are attached at residues asparagine 67 and asparagine 96. The segment at 91–117 (ISSPTNSTRRSLTGRGKGKGKGKWSKL) is disordered. Ca(2+) is bound by residues aspartate 271, aspartate 295, and aspartate 299. The active site involves arginine 351.

It belongs to the polysaccharide lyase 1 family. It depends on Ca(2+) as a cofactor.

The enzyme catalyses Eliminative cleavage of (1-&gt;4)-alpha-D-galacturonan to give oligosaccharides with 4-deoxy-alpha-D-galact-4-enuronosyl groups at their non-reducing ends.. It functions in the pathway glycan metabolism; pectin degradation; 2-dehydro-3-deoxy-D-gluconate from pectin: step 2/5. This Arabidopsis thaliana (Mouse-ear cress) protein is Probable pectate lyase 7.